The primary structure comprises 218 residues: MSDNDQLQQIAHLRREYTKGGLRRRDLPAEPLTLFERWLGQACDARLADPTAMVVATVDDKGQPYQRIVLLKHYDEKGLVFYTNLGSRKAHQIEHNPRISLLFPWHMLERQVMVTGKAERLSTLEVVRYFHSRPRDSQIGAWVSKQSSRISARGILESKFLELKQKFQQGEVPLPSFWGGFRVSIEQMEFWQGGEHRLHDRFLYQRDDGAWKIDRLAP.

Substrate-binding positions include 14-17 (RREY) and Lys72. FMN contacts are provided by residues 67 to 72 (RIVLLK), 82 to 83 (YT), Arg88, Lys89, and Gln111. Tyr129, Arg133, and Ser137 together coordinate substrate. FMN is bound by residues 146 to 147 (QS) and Trp191. Substrate is bound at residue 197 to 199 (RLH). Arg201 serves as a coordination point for FMN.

Belongs to the pyridoxamine 5'-phosphate oxidase family. Homodimer. Requires FMN as cofactor.

It carries out the reaction pyridoxamine 5'-phosphate + O2 + H2O = pyridoxal 5'-phosphate + H2O2 + NH4(+). The catalysed reaction is pyridoxine 5'-phosphate + O2 = pyridoxal 5'-phosphate + H2O2. The protein operates within cofactor metabolism; pyridoxal 5'-phosphate salvage; pyridoxal 5'-phosphate from pyridoxamine 5'-phosphate: step 1/1. It functions in the pathway cofactor metabolism; pyridoxal 5'-phosphate salvage; pyridoxal 5'-phosphate from pyridoxine 5'-phosphate: step 1/1. Catalyzes the oxidation of either pyridoxine 5'-phosphate (PNP) or pyridoxamine 5'-phosphate (PMP) into pyridoxal 5'-phosphate (PLP). This is Pyridoxine/pyridoxamine 5'-phosphate oxidase from Salmonella paratyphi B (strain ATCC BAA-1250 / SPB7).